The chain runs to 790 residues: Phenylalanine--tRNA ligase beta subunit (790 aa).

The tRNA-binding domain occupies 39-154 (PDSLNTVVTG…ENTPLGESAC (116 aa)). A B5 domain is found at 404–483 (SDPLSLNIRP…FVQKTQKILP (80 aa)). Positions 457, 463, 466, and 467 each coordinate Mg(2+). Positions 694-790 (PIYPSSSRDI…NLANIGKGNS (97 aa)) constitute an FDX-ACB domain.

The protein belongs to the phenylalanyl-tRNA synthetase beta subunit family. Type 1 subfamily. As to quaternary structure, tetramer of two alpha and two beta subunits. Mg(2+) serves as cofactor.

The protein resides in the cytoplasm. The catalysed reaction is tRNA(Phe) + L-phenylalanine + ATP = L-phenylalanyl-tRNA(Phe) + AMP + diphosphate + H(+). This is Phenylalanine--tRNA ligase beta subunit (pheT) from Chlamydia muridarum (strain MoPn / Nigg).